The following is a 428-amino-acid chain: CRISPR system endoribonuclease Csm6 (428 aa).

The interval 1-145 (MKILISAVGT…RANREYTALT (145 aa)) is CARF domain. The segment at 146–428 (ESEIDALIME…QNKELIKMLE (283 aa)) is HEPN domain.

Belongs to the CRISPR-associated Csm6 family. In terms of assembly, homodimer. The composite ssRNase active site is formed at the dimer interface.

With respect to regulation, non-specific ssRNase activity is allosterically activated about 1000-fold by cyclic hexaadenylate (cA6), a second messenger produced by Cas10 of the ternary Csm effector complex in the presence of a cognate target RNA. ssRNase activity is inhibited by physiological concentrations of ATP (1 mM), activity is restored by cOA. CRISPR (clustered regularly interspaced short palindromic repeat) is an adaptive immune system that provides protection against mobile genetic elements (viruses, transposable elements and conjugative plasmids). CRISPR clusters contain spacers, sequences complementary to antecedent mobile elements, and target invading nucleic acids. CRISPR clusters are transcribed and processed into CRISPR RNA (crRNA). The type III-A Csm complex binds crRNA and acts as a crRNA-guided RNase, DNase and cyclic oligoadenylate synthase; binding of target RNA cognate to the crRNA is required for all activities. In a heterologous host this Csm effector complex restricts ssRNA phage MS2, suggesting it may target RNA viruses in vivo. This protein is not part of the Csm complex. In terms of biological role, csm functions as a non-specific ssDNase. Base-pairing between crRNA and target RNA to form a ternary Csm complex activates a ssDNase activity; target RNA cleavage suppresses the ssDNase, a temporal control that prevents uncontrolled DNA degradation. Viral RNA transcripts probably tether the Csm complex to the viral genome, recruiting Cas10 ssDNA activity which is able to degrade DNA in the transcription bubble, spatially controlling the DNase activity. Its function is as follows. A single-strand-specific endoribonuclease (ssRNase) that is approximately 1000-fold stimulated by cyclic oligoadenylate (cOA); although several species of cOA are synthesized by this organism only cyclic hexaadenylate (cA6) stimulates the ssRNase activity. Cleaves preferentially within GA or AA dinucleotides, although the presence of cA6 broadens the preference. Linear oligoadenylates do not activate the RNase. This is CRISPR system endoribonuclease Csm6 from Streptococcus thermophilus.